The chain runs to 1384 residues: RRP12-like protein (1384 aa).

The span at 1-13 (MGKFRSKLKRNGK) shows a compositional bias: basic residues. The tract at residues 1–32 (MGKFRSKLKRNGKGKTWSRGESATSNPTQMKH) is disordered. A compositionally biased stretch (polar residues) spans 19–29 (RGESATSNPTQ). Ser82, Ser85, Ser96, Ser1094, Ser1095, Ser1117, and Ser1119 each carry phosphoserine. 3 disordered regions span residues 1082-1102 (LRKKQNLEAQEDSSDDELVSG), 1114-1155 (LADS…IRED), and 1176-1384 (SAQT…KKYK). 2 stretches are compositionally biased toward acidic residues: residues 1090–1099 (AQEDSSDDEL) and 1114–1127 (LADSDSDLPEDMDA). The span at 1176-1191 (SAQTATPAQSQKTKAQ) shows a compositional bias: polar residues. Residues Ser1221, Ser1225, Ser1227, Ser1230, Ser1250, and Ser1251 each carry the phosphoserine modification. Composition is skewed to polar residues over residues 1276–1285 (SGKTTASSRY) and 1297–1315 (TAGNSDAMSVKSGKSTSRP). Residues 1321–1334 (GSKKAKGDMKKSGK) are compositionally biased toward basic and acidic residues. Positions 1348-1362 (LNKRKRSMNSRKFKS) are enriched in basic residues. Positions 1369–1378 (AENGGAGGGR) are enriched in gly residues.

The protein belongs to the RRP12 family.

It is found in the nucleus. This chain is RRP12-like protein, found in Drosophila melanogaster (Fruit fly).